A 98-amino-acid polypeptide reads, in one-letter code: Plastocyanin (98 aa).

Positions 1 to 98 (AAIVKLGGDD…AGMKMTITVQ (98 aa)) constitute a Plastocyanin-like domain. Residues H38, C83, H86, and M91 each contribute to the Cu cation site.

This sequence belongs to the plastocyanin family. The cofactor is Cu(2+).

It localises to the plastid. The protein resides in the chloroplast thylakoid membrane. Participates in electron transfer between P700 and the cytochrome b6-f complex in photosystem I. The polypeptide is Plastocyanin (PETE) (Ulva prolifera (Green seaweed)).